Here is a 487-residue protein sequence, read N- to C-terminus: Protein DETOXIFICATION 11 (487 aa).

Transmembrane regions (helical) follow at residues 35 to 55 (LICF…LQII), 73 to 93 (FAIS…SCAL), 122 to 142 (LVCL…VILG), 151 to 171 (AGRF…LQPL), 184 to 204 (LLIT…LLVY), 211 to 231 (IGGA…LGSF), 264 to 284 (AAML…SGLL), 293 to 313 (VLSV…AIAA), 330 to 350 (AAHI…LMVG), 377 to 397 (MAPL…LSGV), 412 to 432 (FGAF…WVHL), and 435 to 455 (VGLW…LALV).

Belongs to the multi antimicrobial extrusion (MATE) (TC 2.A.66.1) family.

It localises to the membrane. The chain is Protein DETOXIFICATION 11 from Arabidopsis thaliana (Mouse-ear cress).